A 917-amino-acid polypeptide reads, in one-letter code: MDYKETLLLPSTTFAMRANLAELEPQRFKKWFEQNYAYEKMKENRKNAKKSFTLHDGPPYANGHIHIGHALNKILKETIIKTHYFKGESVRFTPGWDCHGLPIEQQVEVKLGEKKKSLSKKEIREFCRQHASEFVDIQREEFKDLGIIADWDKPYLTMKFEFEAAIYRTLCEIAKKGLLCERSKPVFWSWAAKSALAEAEVEYQDKEDYSIFVAFDLDVKACEKLGVSKASAVIWTTTPWTLVANQAIALNPNENYVITKEGLIFASALLKSMVEKGLTSGEIQKELNAKEFEKLEAINPLNGRKSVLIMGEHVLMDGGSGLVHTAPGHGEDDYYACLKYGIEVLMPVDDSGCYDETLRAKGLLPSHLLEEFIGLHIFKANEKILELLGEKLLHSSKFIHSYPFCWRTHKPVIYRATKQWFILMDEPKLQGKTLRECAKEQLLKTTFYPQSGVKRIGSMVENRPDWCISRQRDWGTPIAFFRDKNTKEVIFDDELFDFVAAIFEKHGADAWWEFEIKDLIPTNSKYKAENLEKVYDILDVWFDSGSTFNAVLNSGLYDAGEKRASMYLEGSDQHRGWFQSSLLVGTAINESAPYESILTHGFTTDEKGQKMSKSKGNVIASEYVAKTYGVEILRLWILLSDYSSDLKISDNILKQVGEQYRKIRNTIRFLLANTNDLKDLEVKEFSFIDKWILSRATKVFKASKEAFFAYEFAKGFSLLLNFLSADLSGIYLDISKDRLYCDSENAQRRKSAQVAMALMAKELLNLLAPNLSYSVDEALEHANVLIKGDAKDVFDLSLTQDFDYDFGIDDTFLMSAREKFFEQIDILKKDKIIKSTLELNLNISFNKFPNEELADWFMVSQISNENEEILAEFEVENEKFKITKASLCKCPRCWKLQSKNEETPCLRCEEVLKGVQC.

The short motif at 59–69 (PYANGHIHIGH) is the 'HIGH' region element. Glu569 serves as a coordination point for L-isoleucyl-5'-AMP. Positions 610-614 (KMSKS) match the 'KMSKS' region motif. Lys613 serves as a coordination point for ATP. Residues Cys890, Cys893, Cys905, and Cys908 each coordinate Zn(2+).

This sequence belongs to the class-I aminoacyl-tRNA synthetase family. IleS type 1 subfamily. As to quaternary structure, monomer. Zn(2+) serves as cofactor.

It is found in the cytoplasm. The catalysed reaction is tRNA(Ile) + L-isoleucine + ATP = L-isoleucyl-tRNA(Ile) + AMP + diphosphate. In terms of biological role, catalyzes the attachment of isoleucine to tRNA(Ile). As IleRS can inadvertently accommodate and process structurally similar amino acids such as valine, to avoid such errors it has two additional distinct tRNA(Ile)-dependent editing activities. One activity is designated as 'pretransfer' editing and involves the hydrolysis of activated Val-AMP. The other activity is designated 'posttransfer' editing and involves deacylation of mischarged Val-tRNA(Ile). This Campylobacter jejuni subsp. jejuni serotype O:2 (strain ATCC 700819 / NCTC 11168) protein is Isoleucine--tRNA ligase.